We begin with the raw amino-acid sequence, 524 residues long: PiggyBac transposable element-derived protein 5 (524 aa).

The interval 30–117 (DDVFGESGPD…DTGGPTRKMP (88 aa)) is disordered. A compositionally biased stretch (low complexity) spans 47–59 (STSAASRSSSAAS). The span at 67-79 (PGPPGAAPPPPRA) shows a compositional bias: pro residues. Over residues 98 to 108 (LRDRPPPRFED) the composition is skewed to basic and acidic residues. S521 bears the Phosphoserine mark.

It is found in the nucleus. Its function is as follows. Transposase that mediates sequence-specific genomic rearrangements. Can induce genomic rearrangements that inactivate the HPRT1 gene. In Homo sapiens (Human), this protein is PiggyBac transposable element-derived protein 5 (PGBD5).